Reading from the N-terminus, the 371-residue chain is Alanine dehydrogenase (371 aa).

The substrate site is built by arginine 15 and lysine 75. The active-site Proton donor/acceptor is the histidine 96. NAD(+)-binding positions include serine 134, 178 to 179 (TA), aspartate 198, lysine 203, serine 220, 239 to 240 (VL), 267 to 270 (IAID), arginine 279, and 298 to 301 (VANM). The active-site Proton donor/acceptor is the aspartate 270. Residues glutamate 323 and histidine 327 each contribute to the Mg(2+) site.

The protein belongs to the AlaDH/PNT family. Homohexamer. Trimer of dimers. Mg(2+) is required as a cofactor.

Its subcellular location is the secreted. The catalysed reaction is L-alanine + NAD(+) + H2O = pyruvate + NH4(+) + NADH + H(+). It functions in the pathway amino-acid degradation; L-alanine degradation via dehydrogenase pathway; NH(3) and pyruvate from L-alanine: step 1/1. Its activity is regulated as follows. Inhibited by CuSO(4) and ZnCl(2). In terms of biological role, catalyzes the reversible reductive amination of pyruvate to L-alanine. However, since the physiological environment of M.tuberculosis has a neutral pH, it can be assumed that the enzyme catalyzes exclusively the formation of L-alanine. May play a role in cell wall synthesis as L-alanine is an important constituent of the peptidoglycan layer. The sequence is that of Alanine dehydrogenase (ald) from Mycobacterium tuberculosis (strain ATCC 25618 / H37Rv).